Reading from the N-terminus, the 378-residue chain is GTP cyclohydrolase-2 (378 aa).

The interval 1 to 180 is DHBP synthase-like; sequence MEEVSSHVKS…IKDMIEFRIK (180 aa). The GTP cyclohydrolase II stretch occupies residues 181 to 378; that stretch reads SEKIVERVIE…KMGHLICFND (198 aa). 229-233 provides a ligand contact to GTP; it reads RIHSE. Zn(2+) contacts are provided by Cys234, Cys245, and Cys247. Residues Gln250, 273–275, and Thr295 each bind GTP; that span reads EGR. Residue Asp307 is the Proton acceptor of the active site. The active-site Nucleophile is the Arg309. Thr330 and Lys335 together coordinate GTP.

In the N-terminal section; belongs to the DHBP synthase family. It in the C-terminal section; belongs to the GTP cyclohydrolase II family. Zn(2+) serves as cofactor.

The enzyme catalyses GTP + 4 H2O = 2,5-diamino-6-hydroxy-4-(5-phosphoribosylamino)-pyrimidine + formate + 2 phosphate + 3 H(+). It participates in cofactor biosynthesis; riboflavin biosynthesis; 5-amino-6-(D-ribitylamino)uracil from GTP: step 1/4. Functionally, catalyzes the conversion of GTP to 2,5-diamino-6-ribosylamino-4(3H)-pyrimidinone 5'-phosphate (DARP), formate and pyrophosphate. The chain is GTP cyclohydrolase-2 (ribA) from Archaeoglobus fulgidus (strain ATCC 49558 / DSM 4304 / JCM 9628 / NBRC 100126 / VC-16).